Consider the following 50-residue polypeptide: Large ribosomal subunit protein bL32c (50 aa).

Belongs to the bacterial ribosomal protein bL32 family.

The protein localises to the plastid. The chain is Large ribosomal subunit protein bL32c (rpl32) from Euglena longa (Euglenophycean alga).